We begin with the raw amino-acid sequence, 138 residues long: ATP synthase epsilon chain (138 aa).

Belongs to the ATPase epsilon chain family. F-type ATPases have 2 components, CF(1) - the catalytic core - and CF(0) - the membrane proton channel. CF(1) has five subunits: alpha(3), beta(3), gamma(1), delta(1), epsilon(1). CF(0) has three main subunits: a, b and c.

It is found in the cellular thylakoid membrane. Functionally, produces ATP from ADP in the presence of a proton gradient across the membrane. In Cyanothece sp. (strain PCC 7425 / ATCC 29141), this protein is ATP synthase epsilon chain.